A 128-amino-acid chain; its full sequence is Large ribosomal subunit protein eL22 (128 aa).

It belongs to the eukaryotic ribosomal protein eL22 family. Component of the large ribosomal subunit.

The protein resides in the cytoplasm. Its function is as follows. Component of the large ribosomal subunit. The ribosome is a large ribonucleoprotein complex responsible for the synthesis of proteins in the cell. In Xenopus tropicalis (Western clawed frog), this protein is Large ribosomal subunit protein eL22 (rpl22).